The primary structure comprises 150 residues: Ribosome maturation factor RimP (150 aa).

This sequence belongs to the RimP family.

It is found in the cytoplasm. In terms of biological role, required for maturation of 30S ribosomal subunits. The polypeptide is Ribosome maturation factor RimP (Thermotoga neapolitana (strain ATCC 49049 / DSM 4359 / NBRC 107923 / NS-E)).